A 211-amino-acid polypeptide reads, in one-letter code: Protein-methionine-sulfoxide reductase heme-binding subunit MsrQ (211 aa).

4 helical membrane passes run 10–30 (WLKV…VWAI), 82–102 (LWCF…ELGV), 116–136 (PYLT…FTST), and 153–173 (FVYL…KIIS).

Belongs to the MsrQ family. Heterodimer of a catalytic subunit (MsrP) and a heme-binding subunit (MsrQ). FMN serves as cofactor. Heme b is required as a cofactor.

The protein localises to the cell inner membrane. Functionally, part of the MsrPQ system that repairs oxidized periplasmic proteins containing methionine sulfoxide residues (Met-O), using respiratory chain electrons. Thus protects these proteins from oxidative-stress damage caused by reactive species of oxygen and chlorine generated by the host defense mechanisms. MsrPQ is essential for the maintenance of envelope integrity under bleach stress, rescuing a wide series of structurally unrelated periplasmic proteins from methionine oxidation, including the primary periplasmic chaperone SurA and the lipoprotein Pal. MsrQ provides electrons for reduction to the reductase catalytic subunit MsrP, using the quinone pool of the respiratory chain. The protein is Protein-methionine-sulfoxide reductase heme-binding subunit MsrQ of Escherichia coli O157:H7.